A 231-amino-acid polypeptide reads, in one-letter code: (S)-2-haloacid dehalogenase 4A (231 aa).

Residue Asp-11 is the Nucleophile of the active site. An (S)-2-haloacid-binding positions include 12–13 (AY), Arg-42, and 119–120 (SN). Residues 176–181 (SSNAWD) form an important for catalytic activity region.

This sequence belongs to the HAD-like hydrolase superfamily. S-2-haloalkanoic acid dehalogenase family.

It catalyses the reaction an (S)-2-haloacid + H2O = a (2R)-2-hydroxycarboxylate + a halide anion + H(+). The enzyme catalyses (S)-2-chloropropanoate + H2O = (R)-lactate + chloride + H(+). Catalyzes the hydrolytic dehalogenation of small (S)-2-haloalkanoic acids to yield the corresponding (R)-2-hydroxyalkanoic acids. Acts on acids of short chain lengths, C(2) to C(4), with inversion of configuration at C-3. Active with 2-halogenated carboxylic acids and converts only the S-isomer (or L-isomer) of 2-chloropropionic acid with inversion of configuration to produce R-lactate (or D-isomer). This Burkholderia cepacia (Pseudomonas cepacia) protein is (S)-2-haloacid dehalogenase 4A.